Here is a 788-residue protein sequence, read N- to C-terminus: Integrin beta-6 (788 aa).

Positions Met-1–Gly-21 are cleaved as a signal peptide. The PSI domain maps to Gly-22–Gln-71. Residues Gly-22–Pro-709 are Extracellular-facing. Cystine bridges form between Cys-23-Cys-41, Cys-31-Cys-454, Cys-34-Cys-59, Cys-44-Cys-70, Cys-197-Cys-204, Cys-252-Cys-293, Cys-394-Cys-406, Cys-426-Cys-452, Cys-456-Cys-476, Cys-467-Cys-479, Cys-481-Cys-490, Cys-492-Cys-519, Cys-502-Cys-517, Cys-511-Cys-522, Cys-524-Cys-537, Cys-539-Cys-560, Cys-544-Cys-558, Cys-552-Cys-563, and Cys-565-Cys-574. N-linked (GlcNAc...) asparagine glycosylation is found at Asn-48 and Asn-97. Residues Tyr-131–Leu-371 form the VWFA domain. Residues Asp-140, Ser-142, and Ser-144 each coordinate Mg(2+). 4 residues coordinate Ca(2+): Ser-144, Asp-147, Asp-148, and Glu-179. Ca(2+) contacts are provided by Asn-235, Asp-237, Pro-239, and Glu-240. Glu-240 is a Mg(2+) binding site. Residue Asn-260 is glycosylated (N-linked (GlcNAc...) asparagine). Positions 271 and 355 each coordinate Ca(2+). Residues Asn-387, Asn-396, and Asn-418 are each glycosylated (N-linked (GlcNAc...) asparagine). I-EGF domains follow at residues Cys-456–Glu-491, Cys-492–Gln-538, Cys-539–Asn-575, and Cys-576–Glu-615. 2 N-linked (GlcNAc...) asparagine glycosylation sites follow: Asn-463 and Asn-471. N-linked (GlcNAc...) asparagine glycosylation occurs at Asn-541. The N-linked (GlcNAc...) asparagine glycan is linked to Asn-575. 9 cysteine pairs are disulfide-bonded: Cys-576–Cys-599, Cys-583–Cys-597, Cys-591–Cys-602, Cys-604–Cys-614, Cys-617–Cys-620, Cys-624–Cys-670, Cys-630–Cys-649, Cys-633–Cys-645, and Cys-678–Cys-702. N-linked (GlcNAc...) asparagine glycosylation occurs at Asn-696. The helical transmembrane segment at Met-710–Trp-730 threads the bilayer. Residues Lys-731–Thr-758 form an interaction with HAX1 region. Topologically, residues Lys-731–Gly-788 are cytoplasmic.

Belongs to the integrin beta chain family. In terms of assembly, heterodimer of an alpha and a beta subunit. Interacts with FLNB. Interacts with HAX1. ITGAV:ITGB6 interacts with FBN1. ITGAV:ITGB6 interacts with TGFB1.

The protein resides in the cell membrane. It localises to the cell junction. Its subcellular location is the focal adhesion. In terms of biological role, integrin alpha-V:beta-6 (ITGAV:ITGB6) is a receptor for fibronectin and cytotactin. It recognizes the sequence R-G-D in its ligands. ITGAV:ITGB6 acts as a receptor for fibrillin-1 (FBN1) and mediates R-G-D-dependent cell adhesion to FBN1. Integrin alpha-V:beta-6 (ITGAV:ITGB6) mediates R-G-D-dependent release of transforming growth factor beta-1 (TGF-beta-1) from regulatory Latency-associated peptide (LAP), thereby playing a key role in TGF-beta-1 activation. In Cavia porcellus (Guinea pig), this protein is Integrin beta-6 (ITGB6).